A 325-amino-acid chain; its full sequence is Cln5-like protein 2 (325 aa).

Positions 1 to 19 are cleaved as a signal peptide; that stretch reads MNKLIFIIICLGIVDKTIS. N-linked (GlcNAc...) asparagine glycosylation is found at asparagine 88, asparagine 117, asparagine 133, asparagine 163, asparagine 182, asparagine 189, asparagine 238, and asparagine 262.

This sequence belongs to the CLN5 family.

The protein is Cln5-like protein 2 (cln5lb) of Dictyostelium discoideum (Social amoeba).